A 399-amino-acid chain; its full sequence is Bifunctional enzyme IspD/IspF (399 aa).

Positions 1 to 235 (METWALILAA…MVEQPKTTVP (235 aa)) are 2-C-methyl-D-erythritol 4-phosphate cytidylyltransferase. Residues 236-399 (IVGYGYDVHK…IVIVTAIRIS (164 aa)) are 2-C-methyl-D-erythritol 2,4-cyclodiphosphate synthase. The a divalent metal cation site is built by aspartate 242 and histidine 244. 4-CDP-2-C-methyl-D-erythritol 2-phosphate is bound by residues 242 to 244 (DVH) and 275 to 276 (HS). An a divalent metal cation-binding site is contributed by histidine 283. 4-CDP-2-C-methyl-D-erythritol 2-phosphate is bound by residues 297-299 (DIG), 302-306 (FPDSD), 373-376 (TTEE), and phenylalanine 380.

It in the N-terminal section; belongs to the IspD/TarI cytidylyltransferase family. IspD subfamily. This sequence in the C-terminal section; belongs to the IspF family. A divalent metal cation is required as a cofactor.

It carries out the reaction 2-C-methyl-D-erythritol 4-phosphate + CTP + H(+) = 4-CDP-2-C-methyl-D-erythritol + diphosphate. The enzyme catalyses 4-CDP-2-C-methyl-D-erythritol 2-phosphate = 2-C-methyl-D-erythritol 2,4-cyclic diphosphate + CMP. It functions in the pathway isoprenoid biosynthesis; isopentenyl diphosphate biosynthesis via DXP pathway; isopentenyl diphosphate from 1-deoxy-D-xylulose 5-phosphate: step 2/6. Its pathway is isoprenoid biosynthesis; isopentenyl diphosphate biosynthesis via DXP pathway; isopentenyl diphosphate from 1-deoxy-D-xylulose 5-phosphate: step 4/6. In terms of biological role, bifunctional enzyme that catalyzes the formation of 4-diphosphocytidyl-2-C-methyl-D-erythritol from CTP and 2-C-methyl-D-erythritol 4-phosphate (MEP) (IspD), and catalyzes the conversion of 4-diphosphocytidyl-2-C-methyl-D-erythritol 2-phosphate (CDP-ME2P) to 2-C-methyl-D-erythritol 2,4-cyclodiphosphate (ME-CPP) with a corresponding release of cytidine 5-monophosphate (CMP) (IspF). This Lawsonia intracellularis (strain PHE/MN1-00) protein is Bifunctional enzyme IspD/IspF.